The chain runs to 131 residues: Small ribosomal subunit protein eS8 (131 aa).

The interval 1 to 37 (MKLGAFYKGGDLKKPSGGKKRRVRRTKKKALGGGPPQ) is disordered. Basic residues predominate over residues 16–30 (SGGKKRRVRRTKKKA).

It belongs to the eukaryotic ribosomal protein eS8 family. As to quaternary structure, part of the 30S ribosomal subunit.

The protein is Small ribosomal subunit protein eS8 of Pyrobaculum neutrophilum (strain DSM 2338 / JCM 9278 / NBRC 100436 / V24Sta) (Thermoproteus neutrophilus).